We begin with the raw amino-acid sequence, 455 residues long: Glutamyl-tRNA reductase (455 aa).

Substrate is bound by residues 49–52 (TCNR), serine 109, 114–116 (EAQ), and glutamine 120. The active-site Nucleophile is cysteine 50. 190 to 195 (GAGAMG) is an NADP(+) binding site.

The protein belongs to the glutamyl-tRNA reductase family. In terms of assembly, homodimer.

The catalysed reaction is (S)-4-amino-5-oxopentanoate + tRNA(Glu) + NADP(+) = L-glutamyl-tRNA(Glu) + NADPH + H(+). Its pathway is porphyrin-containing compound metabolism; protoporphyrin-IX biosynthesis; 5-aminolevulinate from L-glutamyl-tRNA(Glu): step 1/2. Catalyzes the NADPH-dependent reduction of glutamyl-tRNA(Glu) to glutamate 1-semialdehyde (GSA). The polypeptide is Glutamyl-tRNA reductase (Salinispora arenicola (strain CNS-205)).